We begin with the raw amino-acid sequence, 46 residues long: Large ribosomal subunit protein bL33B (46 aa).

This sequence belongs to the bacterial ribosomal protein bL33 family.

This Mycoplasmopsis pulmonis (strain UAB CTIP) (Mycoplasma pulmonis) protein is Large ribosomal subunit protein bL33B (rpmG2).